Reading from the N-terminus, the 85-residue chain is Cell division topological specificity factor (85 aa).

The protein belongs to the MinE family.

Its function is as follows. Prevents the cell division inhibition by proteins MinC and MinD at internal division sites while permitting inhibition at polar sites. This ensures cell division at the proper site by restricting the formation of a division septum at the midpoint of the long axis of the cell. This is Cell division topological specificity factor from Dechloromonas aromatica (strain RCB).